We begin with the raw amino-acid sequence, 160 residues long: Ribonuclease H (160 aa).

The region spanning 1–157 is the RNase H type-1 domain; it reads MNIEIYTDGA…CDRLAVEACQ (157 aa). Positions 8, 49, 85, and 149 each coordinate Mg(2+).

The protein belongs to the RNase H family. In terms of assembly, monomer. The cofactor is Mg(2+).

It is found in the cytoplasm. It carries out the reaction Endonucleolytic cleavage to 5'-phosphomonoester.. Its function is as follows. Endonuclease that specifically degrades the RNA of RNA-DNA hybrids. This chain is Ribonuclease H, found in Treponema denticola (strain ATCC 35405 / DSM 14222 / CIP 103919 / JCM 8153 / KCTC 15104).